The primary structure comprises 415 residues: Calcium/calmodulin-dependent serine/threonine-protein kinase (415 aa).

In terms of domain architecture, Protein kinase spans 12–308; it reads YEISEILGRG…AQELLDHPWV (297 aa). Residues 18 to 26 and Lys46 contribute to the ATP site; that span reads LGRGGFSVV. Asp173 acts as the Proton acceptor in catalysis. The interval 318–328 is calmodulin-binding; that stretch reads MDAEIVSRLQS.

It belongs to the protein kinase superfamily. CAMK Ser/Thr protein kinase family. CaMK subfamily.

The enzyme catalyses L-seryl-[protein] + ATP = O-phospho-L-seryl-[protein] + ADP + H(+). It carries out the reaction L-threonyl-[protein] + ATP = O-phospho-L-threonyl-[protein] + ADP + H(+). May be involved in signal transduction processes. The polypeptide is Calcium/calmodulin-dependent serine/threonine-protein kinase (Malus domestica (Apple)).